The primary structure comprises 603 residues: MNHIRNFSIIAHIDHGKSTLADRLIQRCGGLAEREMEAQVLDSMDIEKERGITIKAQTAALHYKALDGQVYNLNLIDTPGHVDFSYEVSRSLSACEGALLVVDASQGVEAQTVANCYTALDLGVEVVPVLNKMDLPNADPDNARSEIEDVIGIDATDAIPCSAKTGLGIDEILEAIVHKMPAPRGNPDGPLRAMIVDSWFDPYVGVVMLVRVVDGRLVKGERIKMMASGAMYNADNIGVFTPANEPRASLEAGEVGYIIAGIKELQAAKVGDTVTLIKPGTGGAAATATEALPGFKEIQPQVFAGLYPTEASEYDSLRDALEKLKLNDSSLRYEPEVSQALGFGFRCGFLGLLHMEIVQERLEREFDQDLITTAPSVVYQVVRNDGEVIMVENPSKMPDVGKMSEIREPIVTVHLYMPQEYVGAVMTLANQKRGVQMNMAYHGRQVMLTYEMPLGEIVLDFFDKLKSVSRGYASMDYEFKEYRASDVVKVDILLNGEKVDALSIIVHRSQSQYRGRAVVSKMREIISRQMFDVAIQAAIGVNIIARETIKALRKNVLAKCYGGDITRKKKLLEKQKAGKKRMKQIGSVEVPQEAFLAILQVED.

The tr-type G domain maps to 2–184 (NHIRNFSIIA…AIVHKMPAPR (183 aa)). Residues 14–19 (DHGKST) and 131–134 (NKMD) contribute to the GTP site.

The protein belongs to the TRAFAC class translation factor GTPase superfamily. Classic translation factor GTPase family. LepA subfamily.

Its subcellular location is the cell inner membrane. It carries out the reaction GTP + H2O = GDP + phosphate + H(+). Its function is as follows. Required for accurate and efficient protein synthesis under certain stress conditions. May act as a fidelity factor of the translation reaction, by catalyzing a one-codon backward translocation of tRNAs on improperly translocated ribosomes. Back-translocation proceeds from a post-translocation (POST) complex to a pre-translocation (PRE) complex, thus giving elongation factor G a second chance to translocate the tRNAs correctly. Binds to ribosomes in a GTP-dependent manner. This chain is Elongation factor 4, found in Variovorax paradoxus (strain S110).